We begin with the raw amino-acid sequence, 583 residues long: L-arabonate dehydratase (583 aa).

Positions 56, 124, and 197 each coordinate [4Fe-4S] cluster.

Belongs to the IlvD/Edd family. Homodimer. [4Fe-4S] cluster is required as a cofactor.

It carries out the reaction L-arabinonate = 2-dehydro-3-deoxy-L-arabinonate + H2O. With respect to regulation, activity is enhanced by Mg(2+), being optimal with a concentration of 1-10 mM Mg(2+). Functionally, catalyzes the dehydration of L-arabonate to L-2-keto-3-deoxyarabonate (L-KDA). Is involved in a degradation pathway of L-arabinose that allows A.brasilense to grow on L-arabinose as a sole carbon source. To a lesser extent, can also use D-xylonate as substrate, but not D-galactonate, D-arabonate, and D-gluconate. This Azospirillum brasilense protein is L-arabonate dehydratase (araC).